Reading from the N-terminus, the 415-residue chain is Histidine--tRNA ligase (415 aa).

This sequence belongs to the class-II aminoacyl-tRNA synthetase family. As to quaternary structure, homodimer.

Its subcellular location is the cytoplasm. It catalyses the reaction tRNA(His) + L-histidine + ATP = L-histidyl-tRNA(His) + AMP + diphosphate + H(+). The chain is Histidine--tRNA ligase from Idiomarina loihiensis (strain ATCC BAA-735 / DSM 15497 / L2-TR).